We begin with the raw amino-acid sequence, 343 residues long: N-acetyl-gamma-glutamyl-phosphate reductase (343 aa).

C146 is an active-site residue.

Belongs to the NAGSA dehydrogenase family. Type 1 subfamily.

The protein resides in the cytoplasm. It carries out the reaction N-acetyl-L-glutamate 5-semialdehyde + phosphate + NADP(+) = N-acetyl-L-glutamyl 5-phosphate + NADPH + H(+). It functions in the pathway amino-acid biosynthesis; L-arginine biosynthesis; N(2)-acetyl-L-ornithine from L-glutamate: step 3/4. Functionally, catalyzes the NADPH-dependent reduction of N-acetyl-5-glutamyl phosphate to yield N-acetyl-L-glutamate 5-semialdehyde. The protein is N-acetyl-gamma-glutamyl-phosphate reductase of Pseudarthrobacter chlorophenolicus (strain ATCC 700700 / DSM 12829 / CIP 107037 / JCM 12360 / KCTC 9906 / NCIMB 13794 / A6) (Arthrobacter chlorophenolicus).